A 345-amino-acid polypeptide reads, in one-letter code: MSIIKNDTIIKAYQGEETDYTPAWFMRQAGRSQPEYRALKEKYSLFEITHQPELCAYVTRLPVENYGTDAAILYKDIMSPLPYIGVDVEIKSGIGPVIHNPIRNLQDVEKLGVINPVSDVPYVLDTIRLLTEEQLEVPLIGFSGAPFTLASYMIEGGPSKNYSKTKALMYREPETWFALMDKLSDMIISYVDAQVEAGAKAIQIFDSWVGSLNAEDYRVFIKPVMTRIFSELRRHEVPLITFGVGARHLLMEWNDLPVDVIGLDWRTSINEAREMGVTKVVQGNLDPAILLSDWQTIEQRTKQILDQGMQSGKHVFNLGHGVTPDIEPATLKKLTELVHNYSKQK.

Substrate contacts are provided by residues 27–31 (RQAGR), Phe46, Asp76, Tyr152, Ser207, and His320.

Belongs to the uroporphyrinogen decarboxylase family. In terms of assembly, homodimer.

Its subcellular location is the cytoplasm. The enzyme catalyses uroporphyrinogen III + 4 H(+) = coproporphyrinogen III + 4 CO2. Its pathway is porphyrin-containing compound metabolism; protoporphyrin-IX biosynthesis; coproporphyrinogen-III from 5-aminolevulinate: step 4/4. In terms of biological role, catalyzes the decarboxylation of four acetate groups of uroporphyrinogen-III to yield coproporphyrinogen-III. The sequence is that of Uroporphyrinogen decarboxylase from Oceanobacillus iheyensis (strain DSM 14371 / CIP 107618 / JCM 11309 / KCTC 3954 / HTE831).